We begin with the raw amino-acid sequence, 305 residues long: UDP-3-O-acyl-N-acetylglucosamine deacetylase (305 aa).

Zn(2+) contacts are provided by H78, H237, and D241. H264 functions as the Proton donor in the catalytic mechanism.

This sequence belongs to the LpxC family. Requires Zn(2+) as cofactor.

The catalysed reaction is a UDP-3-O-[(3R)-3-hydroxyacyl]-N-acetyl-alpha-D-glucosamine + H2O = a UDP-3-O-[(3R)-3-hydroxyacyl]-alpha-D-glucosamine + acetate. The protein operates within glycolipid biosynthesis; lipid IV(A) biosynthesis; lipid IV(A) from (3R)-3-hydroxytetradecanoyl-[acyl-carrier-protein] and UDP-N-acetyl-alpha-D-glucosamine: step 2/6. Catalyzes the hydrolysis of UDP-3-O-myristoyl-N-acetylglucosamine to form UDP-3-O-myristoylglucosamine and acetate, the committed step in lipid A biosynthesis. This chain is UDP-3-O-acyl-N-acetylglucosamine deacetylase, found in Cupriavidus taiwanensis (strain DSM 17343 / BCRC 17206 / CCUG 44338 / CIP 107171 / LMG 19424 / R1) (Ralstonia taiwanensis (strain LMG 19424)).